The primary structure comprises 1839 residues: DNA-directed RNA polymerase II subunit RPB1 (1839 aa).

Positions 66, 69, 76, 79, 106, 109, and 147 each coordinate Zn(2+). Positions 152–174 (DIDDVQSHSTDEPVKKSRGGCGA) are disordered. Basic and acidic residues predominate over residues 156 to 166 (VQSHSTDEPVK). A Zn(2+)-binding site is contributed by cysteine 172. Residues 326-397 (TQKSGRPIKS…PETVTPYNIE (72 aa)) mediate DNA binding. Mg(2+) is bound by residues aspartate 495, aspartate 497, and aspartate 499. Residues 785-795 (GQQNVEGKRIP) are alpha-amanitin binding. The segment at 829-841 (PQEFFFHAMGGRE) is bridging helix. Positions 1538-1726 (PSSSPGYSPS…PSYGPTSPSY (189 aa)) are enriched in low complexity. The interval 1538 to 1839 (PSSSPGYSPS…DASKDDKGNP (302 aa)) is disordered. 27 repeat units span residues 1544-1550 (YSPSSPG), 1551-1557 (YSPTSPG), 1558-1564 (YSPTSPG), 1565-1571 (YSPTSPG), 1572-1578 (YSPTSPT), 1579-1585 (YSPSSPG), 1586-1592 (YSPTSPA), 1593-1599 (YSPTSPS), 1600-1606 (YSPTSPS), 1607-1613 (YSPTSPS), 1614-1620 (YSPTSPS), 1621-1627 (YSPTSPS), 1628-1634 (YSPTSPS), 1635-1641 (YSPTSPA), 1642-1648 (YSPTSPA), 1649-1655 (YSPTSPA), 1656-1662 (YSPTSPS), 1663-1669 (YSPTSPS), 1670-1676 (YSPTSPS), 1677-1683 (YSPTSPS), 1684-1690 (YSPTSPS), 1691-1697 (YSPTSPA), 1698-1704 (YSPTSPG), 1705-1711 (YSPTSPS), 1712-1718 (YSPTSPS), 1719-1725 (YGPTSPS), and 1726-1732 (YNPQSAK). Residues 1544–1813 (YSPSSPGYSP…LPGYSPSSTG (270 aa)) are C-terminal domain (CTD); 37 X 7 AA tandem approximate repeats of Y-[GNS]-P-[QST]-[LNS]-[APT]-[AGKNRSTY]. Residues 1727 to 1745 (NPQSAKYSPSIAYSPSNAR) show a composition bias toward polar residues. The 28; approximate repeat unit spans residues 1733–1738 (YSPSIA). 6 tandem repeats follow at residues 1739 to 1745 (YSPSNAR), 1752 to 1758 (YSPTSPN), 1759 to 1765 (YSPTSPS), 1766 to 1772 (YSPTSPS), 1773 to 1779 (YSPSSPT), and 1780 to 1786 (YSPSSPY). Residues 1747 to 1798 (SPASPYSPTSPNYSPTSPSYSPTSPSYSPSSPTYSPSSPYSSGASPDYSPSA) show a composition bias toward low complexity. One copy of the 35; approximate repeat lies at 1794–1799 (YSPSAG). Tandem repeats lie at residues 1800–1806 (YSPTLPG) and 1807–1813 (YSPSSTG). Residues 1818-1839 (HEGDKKDKTGKKDASKDDKGNP) show a composition bias toward basic and acidic residues.

Belongs to the RNA polymerase beta' chain family. As to quaternary structure, component of the RNA polymerase II (Pol II) complex consisting of at least 12 subunits. Interacts with RDM1. Interacts (via CTD) with PRP40A, PRP40B, PRP40C and CYP59. Interacts with MEE12/CCG1 and MEE14/CBP1. Binds (via CTD) to ATX1, especially when phosphorylated on 'Ser-5' of the heptapeptide repeat. Post-translationally, the tandem 7 residues repeats in the C-terminal domain (CTD) can be highly phosphorylated. The phosphorylation activates Pol II. Phosphorylation occurs mainly at residues 'Ser-2' and 'Ser-5' of the heptapeptide repeat. The phosphorylation state is believed to result from the balanced action of site-specific CTD kinases and phosphatase, and a 'CTD code' that specifies the position of Pol II within the transcription cycle has been proposed. ATX1 seems to regulate phosphorylation statment. 'Ser-2' and 'Ser-5' phosphorylation are repressed by flavopiridol (Flap) and seliciclib (Selic), inhibitors of CDK7 and CDK9.

It is found in the nucleus. The catalysed reaction is RNA(n) + a ribonucleoside 5'-triphosphate = RNA(n+1) + diphosphate. Its function is as follows. DNA-dependent RNA polymerase catalyzes the transcription of DNA into RNA using the four ribonucleoside triphosphates as substrates. Largest and catalytic component of RNA polymerase II which synthesizes mRNA precursors and many functional non-coding RNAs. Forms the polymerase active center together with the second largest subunit. Pol II is the central component of the basal RNA polymerase II transcription machinery. It is composed of mobile elements that move relative to each other. NRPB1 is part of the core element with the central large cleft, the clamp element that moves to open and close the cleft and the jaws that are thought to grab the incoming DNA template. At the start of transcription, a single-stranded DNA template strand of the promoter is positioned within the central active site cleft of Pol II. A bridging helix emanates from NRPB1 and crosses the cleft near the catalytic site and is thought to promote translocation of Pol II by acting as a ratchet that moves the RNA-DNA hybrid through the active site by switching from straight to bent conformations at each step of nucleotide addition. During transcription elongation, Pol II moves on the template as the transcript elongates. Elongation is influenced by the phosphorylation status of the C-terminal domain (CTD) of Pol II largest subunit (NRPB1), which serves as a platform for assembly of factors that regulate transcription initiation, elongation, termination and mRNA processing. The protein is DNA-directed RNA polymerase II subunit RPB1 of Arabidopsis thaliana (Mouse-ear cress).